A 200-amino-acid chain; its full sequence is MASKIETLKANLEAALGARAVSLVEAVGELTLVVKASDYLEVAKQLRDDRSLGFEQLIDLCGVDYQTYGDGAYDGPRFAAVLHLLSVANNWRLRVRVFASDDDLPIVPSVVDIWNSANWYEREAFDLYGIVFEGHPDLRRILTDYGFIGHPFRKDFPVSGYVEMRYDPQEKRVVYQPVTIEPREITPRVIREDRYGGLKH.

This sequence belongs to the complex I 30 kDa subunit family. In terms of assembly, NDH-1 is composed of 14 different subunits. Subunits NuoB, C, D, E, F, and G constitute the peripheral sector of the complex.

Its subcellular location is the cell inner membrane. It carries out the reaction a quinone + NADH + 5 H(+)(in) = a quinol + NAD(+) + 4 H(+)(out). In terms of biological role, NDH-1 shuttles electrons from NADH, via FMN and iron-sulfur (Fe-S) centers, to quinones in the respiratory chain. The immediate electron acceptor for the enzyme in this species is believed to be ubiquinone. Couples the redox reaction to proton translocation (for every two electrons transferred, four hydrogen ions are translocated across the cytoplasmic membrane), and thus conserves the redox energy in a proton gradient. The chain is NADH-quinone oxidoreductase subunit C from Burkholderia mallei (strain NCTC 10247).